Reading from the N-terminus, the 606-residue chain is RUN and FYVE domain-containing protein 2 (606 aa).

Positions 37-169 (DSDYPPLQQF…IDANLCVKGE (133 aa)) constitute an RUN domain. Residues 210-534 (EELNRQLNST…IKEANKALQG (325 aa)) are a coiled coil. An FYVE-type zinc finger spans residues 540-598 (DKEATHCKLCEKEFSLSKRKHHCRNCGEIFCNACSDNELPLPSSPKPVRVCDSCHALLI). Residues C546, C549, C562, C565, C570, C573, C590, and C593 each coordinate Zn(2+).

As to quaternary structure, interacts with BMX. Expressed in brain, lung and testis.

The protein resides in the nucleus. The protein is RUN and FYVE domain-containing protein 2 (RUFY2) of Homo sapiens (Human).